A 114-amino-acid chain; its full sequence is MICOS complex subunit MIC12 (114 aa).

A helical membrane pass occupies residues 4-26; that stretch reads IAKLGSFTLVSGVVATSCYYYFI.

It belongs to the MICOS complex subunit Mic12 family. Component of the mitochondrial contact site and cristae organizing system (MICOS) complex.

It is found in the mitochondrion inner membrane. Functionally, component of the MICOS complex, a large protein complex of the mitochondrial inner membrane that plays crucial roles in the maintenance of crista junctions, inner membrane architecture, and formation of contact sites to the outer membrane. This chain is MICOS complex subunit MIC12 (AIM5), found in Candida glabrata (strain ATCC 2001 / BCRC 20586 / JCM 3761 / NBRC 0622 / NRRL Y-65 / CBS 138) (Yeast).